Here is a 620-residue protein sequence, read N- to C-terminus: MIKKIISVFLLLACIITLAFTAFFYHSKLSDQTKSISSLSSQQAQERLQSYQDSLDFYKKLNTSLSVAIANSLRDKAVEELNAIALRIQENHGFIGVTFASLDGTMFTDIGTLDWNAKTLRRDWFVKTVELGTKHYTAFDIDKTTGQHVLTIATPVYVGNDIVGSVALDIAGDQIASPNGSGMFMMTDRNFNVFASDLTHSTLIGKDLTKEKPLFKNLVSGQYVTFSDADSHWFAVSQTEIDGENKLFTIIDIQQIVQTYKRDIQLIIAGFSGFSCVMLIGLYWVLSKELSGVRQIREWILALSDGQIKERRPIKFHNELDTIAQSLENLQFRLLDVVRNSHRTMNDLSIKQTDITYSIEGNTNNSQQELGLIEQVATATTQLSCTSFDVMQQAQSAELNAETAQKLIAESHDIIDSSSKQTEMVTLSIHESQQIINQLREFSDNISSVTDVINNISDQTNLLALNAAIEAARAGEQGRGFAVVADEVRSLAVKTQQSTIDIQGIILKLQEQSQLADQVMTRNVSLIHETQVANRALIASFNLISDKVLEISNINSIVSTAANEQKIVTEDVAKQMEDIRYLVQENLSAMERTKQANQNISDLTTNLNDALSFFKIELTS.

The Methyl-accepting transducer domain maps to 344-580 (TMNDLSIKQT…DVAKQMEDIR (237 aa)).

This sequence belongs to the methyl-accepting chemotaxis (MCP) protein family.

It is found in the cell inner membrane. May function as an environmental regulator of TCP biogenesis. Negatively regulates the synthesis of the major pilin subunit of TCP (TcpA). The chain is Toxin coregulated pilus biosynthesis protein I (tcpI) from Vibrio cholerae serotype O1 (strain ATCC 39315 / El Tor Inaba N16961).